The chain runs to 325 residues: NADH-quinone oxidoreductase subunit H (325 aa).

8 consecutive transmembrane segments (helical) span residues 11–31 (VLIAVLKAVVILVVVVVCGAL), 81–101 (MIFTLAPVIGFVSLLLAFAIV), 114–134 (IGILFFMMMAGLAVYAVLFAG), 149–169 (ASAQTLSYEVFIGLSFMGVVA), 186–206 (MWNVIPQFFGFLTFAIAGVAV), 237–257 (FFVGEYIGIVTVSALIVTMFF), 265–285 (LPPFVWFALKTAFFMVMFILI), and 304–324 (ICLPLTLLNLLATAAVILYNA).

The protein belongs to the complex I subunit 1 family. In terms of assembly, NDH-1 is composed of 13 different subunits. Subunits NuoA, H, J, K, L, M, N constitute the membrane sector of the complex.

The protein localises to the cell inner membrane. The catalysed reaction is a quinone + NADH + 5 H(+)(in) = a quinol + NAD(+) + 4 H(+)(out). NDH-1 shuttles electrons from NADH, via FMN and iron-sulfur (Fe-S) centers, to quinones in the respiratory chain. The immediate electron acceptor for the enzyme in this species is believed to be ubiquinone. Couples the redox reaction to proton translocation (for every two electrons transferred, four hydrogen ions are translocated across the cytoplasmic membrane), and thus conserves the redox energy in a proton gradient. This subunit may bind ubiquinone. In Photorhabdus laumondii subsp. laumondii (strain DSM 15139 / CIP 105565 / TT01) (Photorhabdus luminescens subsp. laumondii), this protein is NADH-quinone oxidoreductase subunit H.